A 160-amino-acid polypeptide reads, in one-letter code: Vesicle transport protein SFT2B (160 aa).

Residue Met-1 is modified to N-acetylmethionine. The Cytoplasmic portion of the chain corresponds to 1–36 (MDKLKKVLSGQDTEDRSGLSEVVEASSLSWSTRIKG). At Ser-9 the chain carries Phosphoserine. Residues 37-57 (FIACFAIGILCSLLGTVLLWV) traverse the membrane as a helical segment. Topologically, residues 58–63 (PRKGLH) are lumenal. Residues 64–84 (LFAVFYTFGNIASIGSTIFLM) form a helical membrane-spanning segment. The Cytoplasmic segment spans residues 85-98 (GPVKQLKRMFEPTR). Residues 99-119 (LIATIMVLLCFALTLCSAFWW) traverse the membrane as a helical segment. Topologically, residues 120 to 123 (HNKG) are lumenal. A helical transmembrane segment spans residues 124 to 144 (LALIFCILQSLALTWYSLSFI). Over 145 to 160 (PFARDAVKKCFAVCLA) the chain is Cytoplasmic.

Belongs to the SFT2 family.

It localises to the membrane. In terms of biological role, may be involved in fusion of retrograde transport vesicles derived from an endocytic compartment with the Golgi complex. In Homo sapiens (Human), this protein is Vesicle transport protein SFT2B.